Reading from the N-terminus, the 395-residue chain is Pesticidal crystal protein Cry6Ba (395 aa).

This sequence belongs to the cry6A endotoxin family.

Its function is as follows. Endotoxin with nematicidal activity. This is Pesticidal crystal protein Cry6Ba (cry6Ba) from Bacillus thuringiensis.